Here is a 91-residue protein sequence, read N- to C-terminus: uncharacterized protein (91 aa).

The protein resides in the plastid. It is found in the cyanelle. This is an uncharacterized protein from Cyanophora paradoxa.